We begin with the raw amino-acid sequence, 533 residues long: Glucose-6-phosphate exchanger SLC37A1 (533 aa).

The helical transmembrane segment at Q18 to S38 threads the bilayer. N-linked (GlcNAc...) asparagine glycosylation is present at N81. Helical transmembrane passes span G100–I120, Y129–F149, F157–V177, and S222–I242. An N-linked (GlcNAc...) asparagine glycan is attached at N263. The next 7 membrane-spanning stretches (helical) occupy residues V304 to L324, L334 to I354, G366 to I386, A394 to V414, I423 to A443, A466 to L486, and G490 to I510.

It belongs to the major facilitator superfamily. Organophosphate:Pi antiporter (OPA) (TC 2.A.1.4) family. In terms of tissue distribution, expressed in numerous tissues, with highest expression in pancreas, kidney, bone marrow, spleen, liver, small intestine, as well as in fetal brain, liver and spleen.

The protein resides in the endoplasmic reticulum membrane. It carries out the reaction D-glucose 6-phosphate(in) + phosphate(out) = D-glucose 6-phosphate(out) + phosphate(in). Its activity is regulated as follows. Inhibited by vanadate but not by chlorogenic acid. Functionally, inorganic phosphate and glucose-6-phosphate antiporter. May transport cytoplasmic glucose-6-phosphate into the lumen of the endoplasmic reticulum and translocate inorganic phosphate into the opposite direction. Independent of a lumenal glucose-6-phosphatase. May not play a role in homeostatic regulation of blood glucose levels. The protein is Glucose-6-phosphate exchanger SLC37A1 of Homo sapiens (Human).